The primary structure comprises 163 residues: Small heat shock protein C4 (163 aa).

Positions 53–163 (YNNKILSPRT…QSKAKKIKIS (111 aa)) constitute a sHSP domain.

It belongs to the small heat shock protein (HSP20) family.

This chain is Small heat shock protein C4 (hspc4-1), found in Rickettsia felis (strain ATCC VR-1525 / URRWXCal2) (Rickettsia azadi).